Consider the following 288-residue polypeptide: Transformer-2 protein homolog beta (288 aa).

Disordered regions lie at residues 1–114 (MSDS…RANP) and 196–225 (TKRPHTPTPGIYMGRPTYGSSRRRDYYDRG). Ser-2 carries the post-translational modification N-acetylserine. A phosphoserine mark is found at Ser-2, Ser-4, and Ser-14. Over residues 17 to 28 (ASRSGSAHGSGK) the composition is skewed to low complexity. Phosphoserine is present on Ser-29. Thr-33 is modified (phosphothreonine). Over residues 59-109 (RSRRSSRRHYTRSRSRSRSHRRSRSRSYSRDYRRRHSHSHSPMSTRRRHVG) the composition is skewed to basic residues. A phosphoserine mark is found at Ser-83, Ser-85, Ser-87, Ser-95, Ser-97, and Ser-99. Thr-103 is subject to Phosphothreonine. One can recognise an RRM domain in the interval 118–196 (CCLGVFGLSL…RRIRVDFSIT (79 aa)). Positions 193-230 (FSITKRPHTPTPGIYMGRPTYGSSRRRDYYDRGYDRGY) are linker. Lys-197 is covalently cross-linked (Glycyl lysine isopeptide (Lys-Gly) (interchain with G-Cter in SUMO2)). Phosphothreonine occurs at positions 201 and 203. Phosphoserine occurs at positions 215 and 237. Position 241 is an asymmetric dimethylarginine; alternate (Arg-241). Arg-241 is subject to Dimethylated arginine; alternate. An Omega-N-methylarginine; alternate modification is found at Arg-241. The segment at 242–288 (GGGGGGGGWRAAQDRDQIYRRRSPSPYYSRGGYRSRSRSRSYSPRRY) is disordered. The segment covering 274–288 (YRSRSRSRSYSPRRY) has biased composition (basic residues).

It belongs to the splicing factor SR family. As to quaternary structure, found in a pre-mRNA exonic splicing enhancer (ESE) complex with TRA2B/SFRS10, SNRNP70, SNRPA1 and SRRM1. Binds to A3 enhancer proteins SFRS4, SFRS5, SFRS6 and SFRS9. Interacts with CPSF6, RBMY1A1, RBMX, RNPS1 and phosphorylated SFRS13A. Interacts with SAFB/SAFB1. Interacts with ILDR1 (via C-terminus) and ILDR2. In terms of processing, phosphorylated in the RS domains.

It localises to the nucleus. Sequence-specific RNA-binding protein which participates in the control of pre-mRNA splicing. Can either activate or suppress exon inclusion. Acts additively with RBMX to promote exon 7 inclusion of the survival motor neuron SMN2. Activates the splicing of MAPT/Tau exon 10. Alters pre-mRNA splicing patterns by antagonizing the effects of splicing regulators, like RBMX. Binds to the AG-rich SE2 domain in the SMN exon 7 RNA. Binds to pre-mRNA. This chain is Transformer-2 protein homolog beta (TRA2B), found in Bos taurus (Bovine).